A 573-amino-acid chain; its full sequence is MLO-like protein 11 (573 aa).

Residues 1–19 (MGEGEENGNEADSNERSLA) are Extracellular-facing. The chain crosses the membrane as a helical span at residues 20–40 (LSPTWSVAIVLTVFVVVSLIV). The Cytoplasmic portion of the chain corresponds to 41–69 (ERSIYRLSTWLRKTKRKPMFAALEKMKEE). The chain crosses the membrane as a helical span at residues 70 to 90 (LMLLGFISLLLTATSSTIANI). Residues 91 to 163 (CVPSSFYNDR…SYEGLEQLHR (73 aa)) are Extracellular-facing. A helical membrane pass occupies residues 164–184 (FIFIMAVTHVTYSCLTMLLAI). At 185 to 287 (VKIHSWRIWE…IRSMEEEFQR (103 aa)) the chain is on the cytoplasmic side. 2 consecutive transmembrane segments (helical) span residues 288–308 (IVGV…FNIK) and 309–329 (GSNL…LVGA). Topologically, residues 330–371 (KLQHVIATLALENAGLTEYPSGVKLRPRDELFWFNKPELLLS) are cytoplasmic. Residues 372-392 (LIHFILFQNSFELASFFWFWW) form a helical membrane-spanning segment. Topologically, residues 393-411 (QFGYSSCFLKNHYLVYFRL) are extracellular. Residues 412-432 (LLGFAGQFLCSYSTLPLYALV) form a helical membrane-spanning segment. Over 433 to 573 (TQMGTNYKAA…SSSLPSEKRV (141 aa)) the chain is Cytoplasmic. The calmodulin-binding stretch occupies residues 446-467 (QRIRETIRGWGKATRRKRRHGL). Disordered regions lie at residues 500-532 (EQQR…TSSR) and 554-573 (RSEP…EKRV). Residues 507–516 (EQGTTELELQ) are compositionally biased toward low complexity. Residues 561–573 (LSRSSSLPSEKRV) show a composition bias toward polar residues.

The protein belongs to the MLO family.

The protein localises to the membrane. In terms of biological role, may be involved in modulation of pathogen defense and leaf cell death. Activity seems to be regulated by Ca(2+)-dependent calmodulin binding and seems not to require heterotrimeric G proteins. This chain is MLO-like protein 11 (MLO11), found in Arabidopsis thaliana (Mouse-ear cress).